Reading from the N-terminus, the 794-residue chain is MSFPKAPLKRFNDPSGCAPSPGAYDVKTSEATKGPVSFQKSQRFKNQRESQQNLNIDKDTTLLASAKKAKKSVSKKDSQKNDKDVKRLEKEIRALLQERGTQDKRIQDMESELEKTEAKLNAAVREKTSLSASNASLEKRLTELTRANELLKAKFSEDGHQKNMRALSLELMKLRNKRETKMRSMMVKQEGMELKLQATQKDLTESKGKIVQLEGKLVSIEKEKIDEKCETEKLLEYIQEISCASDQVEKCKVDIAQLEEDLKEKDREILSLKQSLEENITFSKQIEDLTVKCQLLETERDNLVSKDRERAETLSAEMQILTERLALERQEYEKLQQKELQSQSLLQQEKELSARLQQQLCSFQEEMTSEKNVFKEELKLALAELDAVQQKEEQSERLVKQLEEETKSTAEQLTRLDNLLREKEVELEKHIAAHAQAILIAQEKYNDTAQSLRDVTAQLESVQEKYNDTAQSLRDVTAQLESEQEKYNDTAQSLRDVTAQLESEQEKYNDTAQSLRDVTAQLESVQEKYNDTAQSLRDVTAQLESYKSSTLKEIEDLKLENLTLQEKVAMAEKSVEDVQQQILTAESTNQEYARMVQDLQNRSTLKEEEIKEITSSFLEKITDLKNQLRQQDEDFRKQLEEKGKRTAEKENVMTELTMEINKWRLLYEELYEKTKPFQQQLDAFEAEKQALLNEHGATQEQLNKIRDSYAQLLGHQNLKQKIKHVVKLKDENSQLKSEVSKLRSQLVKRKQNELRLQGELDKALGIRHFDPSKAFCHASKENFTPLKEGNPNCC.

Positions 1–87 (MSFPKAPLKR…SQKNDKDVKR (87 aa)) are disordered. Serine 20 bears the Phosphoserine mark. Positions 74 to 87 (SKKDSQKNDKDVKR) are enriched in basic and acidic residues. Residues asparagine 134, asparagine 279, asparagine 446, asparagine 467, asparagine 488, asparagine 509, asparagine 530, asparagine 561, and asparagine 601 are each glycosylated (N-linked (GlcNAc...) asparagine). Residues 365-630 (EEMTSEKNVF…ITDLKNQLRQ (266 aa)) are required for interaction with FAM83D. A run of 5 repeats spans residues 442–462 (QEKY…LESV), 463–483 (QEKY…LESE), 484–504 (QEKY…LESE), 505–525 (QEKY…LESV), and 526–546 (QEKY…LESY). Residues 442–546 (QEKYNDTAQS…RDVTAQLESY (105 aa)) form a 5 X 21 AA tandem repeats region. 2 hyaluronic acid-binding regions span residues 719-729 (KQKIKHVVKLK) and 741-750 (KLRSQLVKRK). Threonine 784 is subject to Phosphothreonine.

Interacts with ANKRD26. Interacts with DYNLL1. Interacts with FAM83D/CHICA. Ubiquitously expressed.

Its subcellular location is the cell surface. The protein localises to the cytoplasm. The protein resides in the cytoskeleton. It localises to the spindle. Receptor for hyaluronic acid (HA). Involved in cell motility. When hyaluronan binds to HMMR, the phosphorylation of a number of proteins, including the PTK2/FAK1 occurs. May also be involved in cellular transformation and metastasis formation, and in regulating extracellular-regulated kinase (ERK) activity. May act as a regulator of adipogenesis. This is Hyaluronan mediated motility receptor (Hmmr) from Mus musculus (Mouse).